The primary structure comprises 470 residues: Trigger factor (470 aa).

The region spanning 164–243 (GDYVVIDMTA…VTAVKVQELP (80 aa)) is the PPIase FKBP-type domain. Composition is skewed to acidic residues over residues 424–438 (ETDA…ESVE) and 445–470 (AEDD…AAKA). A disordered region spans residues 424-470 (ETDAEDAAEGVESVEVDLSAAAEDDAEETSDEPAAEDTATEDEAAKA).

The protein belongs to the FKBP-type PPIase family. Tig subfamily.

The protein localises to the cytoplasm. It catalyses the reaction [protein]-peptidylproline (omega=180) = [protein]-peptidylproline (omega=0). In terms of biological role, involved in protein export. Acts as a chaperone by maintaining the newly synthesized protein in an open conformation. Functions as a peptidyl-prolyl cis-trans isomerase. This is Trigger factor from Beutenbergia cavernae (strain ATCC BAA-8 / DSM 12333 / CCUG 43141 / JCM 11478 / NBRC 16432 / NCIMB 13614 / HKI 0122).